Here is a 94-residue protein sequence, read N- to C-terminus: Selenoprotein K (94 aa).

Residues 20–42 (LSLITDFFWGIAEFVVLFFKTLL) form a helical membrane-spanning segment. The segment at 48 to 94 (KRRSYGNSSDSRYDDGRGPPGNPPRRMGRINHLRGPSPPPMAGGUGR) is disordered. Sec-92 is a non-standard amino acid (selenocysteine).

The protein belongs to the selenoprotein K family. Interacts with DERL1, DERL2, DERL3 and SELENOS. The SELENOK-SELENOS complex interacts with VCP. Interacts with ZDHHC6. In terms of processing, cleaved by CAPN2/m-calpain in resting macrophages but not in activated macrophages. Macrophage activation up-regulates expression of the calpain inhibitor CAST/calpastatin, resulting in inhibition of CAPN2 activity. Truncated SELENOK proteins produced by failed UGA/Sec decoding are ubiquitinated by the CRL2(KLHDC2) complex, which recognizes the diglycine (Gly-Gly) at the C-terminus of truncated SELENOK proteins. As to expression, highly expressed in heart.

The protein resides in the endoplasmic reticulum membrane. It localises to the cell membrane. In terms of biological role, required for Ca(2+) flux in immune cells and plays a role in T-cell proliferation and in T-cell and neutrophil migration. Involved in endoplasmic reticulum-associated degradation (ERAD) of soluble glycosylated proteins. Required for palmitoylation and cell surface expression of CD36 and involved in macrophage uptake of low-density lipoprotein and in foam cell formation. Together with ZDHHC6, required for palmitoylation of ITPR1 in immune cells, leading to regulate ITPR1 stability and function. Plays a role in protection of cells from ER stress-induced apoptosis. Protects cells from oxidative stress when overexpressed in cardiomyocytes. This is Selenoprotein K from Homo sapiens (Human).